The sequence spans 140 residues: Blasticidin-S deaminase (140 aa).

Residues 8–140 (QQDLELVEVA…ELIPLKYTRN (133 aa)) form the CMP/dCMP-type deaminase domain. Position 59 (Cys59) interacts with Zn(2+). Residue Glu61 is the Proton donor of the active site. Zn(2+) contacts are provided by Cys100 and Cys103.

Belongs to the cytidine and deoxycytidylate deaminase family. The cofactor is Zn(2+).

It carries out the reaction blasticidin S + H2O + H(+) = deaminohydroxyblasticidin S + NH4(+). Its function is as follows. Catalyzes the deamination of the cytosine moiety of the antibiotics blasticidin S, cytomycin and acetylblasticidin S. The polypeptide is Blasticidin-S deaminase (bsr) (Bacillus cereus).